The primary structure comprises 545 residues: Glucose-6-phosphate isomerase (545 aa).

Glu-351 serves as the catalytic Proton donor. Active-site residues include His-382 and Lys-510.

It belongs to the GPI family.

It localises to the cytoplasm. It carries out the reaction alpha-D-glucose 6-phosphate = beta-D-fructose 6-phosphate. Its pathway is carbohydrate biosynthesis; gluconeogenesis. It participates in carbohydrate degradation; glycolysis; D-glyceraldehyde 3-phosphate and glycerone phosphate from D-glucose: step 2/4. Catalyzes the reversible isomerization of glucose-6-phosphate to fructose-6-phosphate. The sequence is that of Glucose-6-phosphate isomerase from Shewanella baltica (strain OS185).